Reading from the N-terminus, the 340-residue chain is Uroporphyrinogen decarboxylase (340 aa).

Residues 23–27 (RQAGR), Asp72, Tyr147, Thr202, and His316 each bind substrate.

This sequence belongs to the uroporphyrinogen decarboxylase family. As to quaternary structure, homodimer.

The protein resides in the cytoplasm. The enzyme catalyses uroporphyrinogen III + 4 H(+) = coproporphyrinogen III + 4 CO2. It participates in porphyrin-containing compound metabolism; protoporphyrin-IX biosynthesis; coproporphyrinogen-III from 5-aminolevulinate: step 4/4. Functionally, catalyzes the decarboxylation of four acetate groups of uroporphyrinogen-III to yield coproporphyrinogen-III. The sequence is that of Uroporphyrinogen decarboxylase from Trichlorobacter lovleyi (strain ATCC BAA-1151 / DSM 17278 / SZ) (Geobacter lovleyi).